A 230-amino-acid polypeptide reads, in one-letter code: Ureidoacrylate amidohydrolase RutB (230 aa).

Asp-24 functions as the Proton acceptor in the catalytic mechanism. The active site involves Lys-133. The Nucleophile role is filled by Cys-166.

The protein belongs to the isochorismatase family. RutB subfamily.

It catalyses the reaction (Z)-3-ureidoacrylate + H2O + H(+) = (Z)-3-aminoacrylate + NH4(+) + CO2. It carries out the reaction (Z)-3-ureidoacrylate + H2O = (Z)-3-aminoacrylate + carbamate + H(+). The enzyme catalyses (Z)-2-methylureidoacrylate + H2O + H(+) = (Z)-2-methylaminoacrylate + NH4(+) + CO2. Hydrolyzes ureidoacrylate to form aminoacrylate and carbamate. The carbamate hydrolyzes spontaneously, thereby releasing one of the nitrogen atoms of the pyrimidine ring as ammonia and one of its carbon atoms as CO2. The sequence is that of Ureidoacrylate amidohydrolase RutB from Escherichia coli O81 (strain ED1a).